Reading from the N-terminus, the 51-residue chain is ARSFSSYCVRCRRKTPSFNSKTVTFRNKRRAIRSHCAYCQVKKFRIIGHGG.

A zinc finger lies at 8–39; sequence CVRCRRKTPSFNSKTVTFRNKRRAIRSHCAYC.

In terms of tissue distribution, sperm.

It localises to the nucleus. This Sepia officinalis (Common cuttlefish) protein is Epididymal sperm protein E.